Here is a 193-residue protein sequence, read N- to C-terminus: Ribosome hibernation promotion factor (193 aa).

The protein belongs to the HPF/YfiA ribosome-associated protein family. Long HPF subfamily. Interacts with 100S ribosomes.

It localises to the cytoplasm. Functionally, might modulate either transcription and/or translation. Its function is as follows. Required for dimerization of active 70S ribosomes into 100S ribosomes in stationary phase; 100S ribosomes are translationally inactive and sometimes present during exponential growth. The polypeptide is Ribosome hibernation promotion factor (Picosynechococcus sp. (strain ATCC 27264 / PCC 7002 / PR-6) (Agmenellum quadruplicatum)).